Reading from the N-terminus, the 341-residue chain is Phenylalanine--tRNA ligase alpha subunit (341 aa).

Glutamate 256 is a Mg(2+) binding site.

It belongs to the class-II aminoacyl-tRNA synthetase family. Phe-tRNA synthetase alpha subunit type 1 subfamily. As to quaternary structure, tetramer of two alpha and two beta subunits. It depends on Mg(2+) as a cofactor.

Its subcellular location is the cytoplasm. The enzyme catalyses tRNA(Phe) + L-phenylalanine + ATP = L-phenylalanyl-tRNA(Phe) + AMP + diphosphate + H(+). This Chlamydia muridarum (strain MoPn / Nigg) protein is Phenylalanine--tRNA ligase alpha subunit (pheS).